Here is a 520-residue protein sequence, read N- to C-terminus: Alpha-1B adrenergic receptor (520 aa).

At 1–45 (MNPDLDTGHNTSAPAHWGELKNANFTGPNQTSSNSTLPQLDITRA) the chain is on the extracellular side. 4 N-linked (GlcNAc...) asparagine glycosylation sites follow: Asn-10, Asn-24, Asn-29, and Asn-34. The helical transmembrane segment at 46-70 (ISVGLVLGAFILFAIVGNILVILSV) threads the bilayer. The Cytoplasmic segment spans residues 71–83 (ACNRHLRTPTNYF). The helical transmembrane segment at 84-105 (IVNLAMADLLLSFTVLPFSAAL) threads the bilayer. Over 106 to 115 (EVLGYWVLGR) the chain is Extracellular. The helical transmembrane segment at 116–141 (IFCDIWAAVDVLCCTASILSLCAISI) threads the bilayer. A disulfide bridge connects residues Cys-118 and Cys-195. Topologically, residues 142–161 (DRYIGVRYSLQYPTLVTRRK) are cytoplasmic. Residues 162 to 184 (AILALLSVWVLSTVISIGPLLGW) form a helical membrane-spanning segment. Topologically, residues 185-201 (KEPAPNDDKECGVTEEP) are extracellular. The helical transmembrane segment at 202-224 (FYALFSSLGSFYIPLAVILVMYC) threads the bilayer. Residues 225–295 (RVYIVAKRTT…FSREKKAAKT (71 aa)) are Cytoplasmic-facing. A Phosphothreonine modification is found at Thr-264. Residues 296 to 319 (LGIVVGMFILCWLPFFIALPLGSL) form a helical membrane-spanning segment. Residues 320–326 (FSTLKPP) are Extracellular-facing. The chain crosses the membrane as a helical span at residues 327 to 351 (DAVFKVVFWLGYFNSCLNPIIYPCS). At 352 to 520 (SKEFKRAFVR…SNMPLAPGQF (169 aa)) the chain is on the cytoplasmic side. A lipid anchor (S-palmitoyl cysteine) is attached at Cys-365. The Nuclear localization signal signature appears at 368–380 (RGRGRRRRRRRRR). Disordered regions lie at residues 394–432 (GGSL…GYLG) and 479–520 (LTEP…PGQF).

This sequence belongs to the G-protein coupled receptor 1 family. Adrenergic receptor subfamily. ADRA1B sub-subfamily. As to quaternary structure, homo- and heterooligomer. Heterooligomerizes with ADRA1B homooligomers in cardiac myocytes. Interacts with CAVIN4.

Its subcellular location is the nucleus membrane. The protein localises to the cell membrane. It localises to the cytoplasm. It is found in the membrane. The protein resides in the caveola. This alpha-adrenergic receptor mediates its action by association with G proteins that activate a phosphatidylinositol-calcium second messenger system. Its effect is mediated by G(q) and G(11) proteins. Nuclear ADRA1A-ADRA1B heterooligomers regulate phenylephrine (PE)-stimulated ERK signaling in cardiac myocytes. The chain is Alpha-1B adrenergic receptor (ADRA1B) from Homo sapiens (Human).